The chain runs to 441 residues: Hydroxycinnamoyl-CoA:5-hydroxyanthranilate N-hydroxycinnamoyltransferase HHT1 (441 aa).

Active-site proton acceptor residues include His158 and Asp388.

Belongs to the plant acyltransferase family.

The catalysed reaction is 5-hydroxyanthranilate + (E)-4-coumaroyl-CoA = avenanthramide A + CoA. It catalyses the reaction 5-hydroxyanthranilate + (E)-caffeoyl-CoA = avenanthramide C + CoA. Functionally, involved in the biosynthesis of avenanthramide phytoalexins, which are phenolic alkaloids found mainly in oats. Catalyzes the N-acylation of 5-hydroxyanthranilate with 4-coumaroyl-CoA or caffeoyl-CoA as acyl donors, forming avenanthramide A and avenanthramide C, respectively. Does not accept feruloyl-CoA as a substrate. The sequence is that of Hydroxycinnamoyl-CoA:5-hydroxyanthranilate N-hydroxycinnamoyltransferase HHT1 from Avena sativa (Oat).